We begin with the raw amino-acid sequence, 444 residues long: MITTRFAPSPTGFLHVGNIRTALINWLYARHHHGRFVLRIDDTDSERSTEEYTQAIRADLAWLNLNPDVEYSQSKRSELYEIRFESLKAKGRIYPCYETPQELDLKRRIAIGRGLPPIYDRAALNLTIEERSELEEKGIKPHWRFRLDHDHAIKWNDLIRGEQRFDPKLLSDPVIRRADGSWLYLLPSVIDDIDMEITTIVRGEDHVSNTATQIQMFQALEAELPEFAHMALLTGGDAKISKRFGADSVADFKADHIEPIALEALLARIGTSDPVEVLTDLAPLVENFDFSHFSRAPARFDMAELKHLNARILHITPYEQVADRLPEAMDAHSWEVIRPNIDDLSEAAFWWSVVKEDIAKPDLSAEDKAYLVEAMAIAKTLDWSSNPWKEWIDILKKQSGRKGKALFLPLRLALTGQSHGPDMAGLLSLIGHEKAIKRLEQAVK.

The short motif at Pro-8–Asn-18 is the 'HIGH' region element. The short motif at Lys-239–Arg-243 is the 'KMSKS' region element. Lys-242 is an ATP binding site.

It belongs to the class-I aminoacyl-tRNA synthetase family. Glutamate--tRNA ligase type 1 subfamily. Monomer.

It is found in the cytoplasm. It carries out the reaction tRNA(Glu) + L-glutamate + ATP = L-glutamyl-tRNA(Glu) + AMP + diphosphate. Functionally, catalyzes the attachment of glutamate to tRNA(Glu) in a two-step reaction: glutamate is first activated by ATP to form Glu-AMP and then transferred to the acceptor end of tRNA(Glu). The protein is Glutamate--tRNA ligase 1 of Zymomonas mobilis subsp. mobilis (strain ATCC 31821 / ZM4 / CP4).